The sequence spans 796 residues: Inactive dipeptidyl peptidase 10 (796 aa).

Residues 1-34 (MNQTASVSHHIKCQPSKTIKELGSNSPPQRNWKG) are Cytoplasmic-facing. Positions 1 to 55 (MNQTASVSHHIKCQPSKTIKELGSNSPPQRNWKGIAIALLVILVVCSLITMSVIL) are mediates effects on KCND2. The chain crosses the membrane as a helical; Signal-anchor for type II membrane protein span at residues 35 to 55 (IAIALLVILVVCSLITMSVIL). The Extracellular portion of the chain corresponds to 56-796 (LTPDELTNSS…VLPQEPEEDE (741 aa)). N-linked (GlcNAc...) asparagine glycosylation is found at Asn63, Asn90, Asn111, and Asn119. Tyr138 and Tyr143 each carry phosphotyrosine. N-linked (GlcNAc...) asparagine glycosylation is found at Asn257, Asn342, and Asn748.

Belongs to the peptidase S9B family. DPPIV subfamily. As to quaternary structure, may form oligomers. Interacts with KCND1. Interacts with KCND2. Identified in a complex with KCND2 and KCNIP3. N-glycosylation is important for cell surface expression, specially at Asn-257, which is crucial. In terms of tissue distribution, detected in brain cortex, hippocampus, thalamus and cerebellum Purkinje cells (at protein level).

Its subcellular location is the cell membrane. Promotes cell surface expression of the potassium channel KCND2. Modulates the activity and gating characteristics of the potassium channel KCND2. Has no dipeptidyl aminopeptidase activity. This chain is Inactive dipeptidyl peptidase 10 (Dpp10), found in Rattus norvegicus (Rat).